The following is a 409-amino-acid chain: Argininosuccinate synthase (409 aa).

An ATP-binding site is contributed by 10–18 (AYSGGLDTS). L-citrulline is bound at residue Y87. Position 117 (G117) interacts with ATP. Residues T119, N123, and D124 each coordinate L-aspartate. Residue N123 coordinates L-citrulline. Positions 127, 175, 184, 260, and 272 each coordinate L-citrulline.

Belongs to the argininosuccinate synthase family. Type 1 subfamily. Homotetramer.

The protein resides in the cytoplasm. The catalysed reaction is L-citrulline + L-aspartate + ATP = 2-(N(omega)-L-arginino)succinate + AMP + diphosphate + H(+). Its pathway is amino-acid biosynthesis; L-arginine biosynthesis; L-arginine from L-ornithine and carbamoyl phosphate: step 2/3. The sequence is that of Argininosuccinate synthase from Rubrobacter xylanophilus (strain DSM 9941 / JCM 11954 / NBRC 16129 / PRD-1).